Here is a 123-residue protein sequence, read N- to C-terminus: MESSLYKKTSGKARRALRVRKALKGSSLKPRLSVVKTNKHIYVQLIDDVEGKTLASISTLAKISKTSGLTKKNQDNAKALGVKIAELGKSLQVDRIVFDRGAHKYHGVVAMVADGAREGGLQF.

The protein belongs to the universal ribosomal protein uL18 family. In terms of assembly, part of the 50S ribosomal subunit; part of the 5S rRNA/L5/L18/L25 subcomplex. Contacts the 5S and 23S rRNAs.

Its function is as follows. This is one of the proteins that bind and probably mediate the attachment of the 5S RNA into the large ribosomal subunit, where it forms part of the central protuberance. This is Large ribosomal subunit protein uL18 from Chlamydia muridarum (strain MoPn / Nigg).